We begin with the raw amino-acid sequence, 281 residues long: Pantothenate synthetase (281 aa).

30 to 37 (MGYLHEGH) lines the ATP pocket. His-37 acts as the Proton donor in catalysis. Residue Gln-60 participates in (R)-pantoate binding. Gln-60 contacts beta-alanine. 146–149 (GEKD) serves as a coordination point for ATP. Gln-152 serves as a coordination point for (R)-pantoate. ATP is bound by residues Ile-175 and 183–186 (KSSR).

It belongs to the pantothenate synthetase family. Homodimer.

Its subcellular location is the cytoplasm. It catalyses the reaction (R)-pantoate + beta-alanine + ATP = (R)-pantothenate + AMP + diphosphate + H(+). It participates in cofactor biosynthesis; (R)-pantothenate biosynthesis; (R)-pantothenate from (R)-pantoate and beta-alanine: step 1/1. Its function is as follows. Catalyzes the condensation of pantoate with beta-alanine in an ATP-dependent reaction via a pantoyl-adenylate intermediate. In Ruminiclostridium cellulolyticum (strain ATCC 35319 / DSM 5812 / JCM 6584 / H10) (Clostridium cellulolyticum), this protein is Pantothenate synthetase.